The primary structure comprises 322 residues: Tyrosine recombinase XerC (322 aa).

The Core-binding (CB) domain maps to 14-104 (PDLREAAAAW…ALRSFARHLD (91 aa)). A Tyr recombinase domain is found at 125-311 (RLPRPLPVAA…DSARLLSAFD (187 aa)). Active-site residues include arginine 170, lysine 195, histidine 263, arginine 266, and histidine 289. Catalysis depends on tyrosine 298, which acts as the O-(3'-phospho-DNA)-tyrosine intermediate.

The protein belongs to the 'phage' integrase family. XerC subfamily. Forms a cyclic heterotetrameric complex composed of two molecules of XerC and two molecules of XerD.

It is found in the cytoplasm. In terms of biological role, site-specific tyrosine recombinase, which acts by catalyzing the cutting and rejoining of the recombining DNA molecules. The XerC-XerD complex is essential to convert dimers of the bacterial chromosome into monomers to permit their segregation at cell division. It also contributes to the segregational stability of plasmids. The sequence is that of Tyrosine recombinase XerC from Methylobacterium nodulans (strain LMG 21967 / CNCM I-2342 / ORS 2060).